The primary structure comprises 71 residues: Small ribosomal subunit protein bS21 (71 aa).

Belongs to the bacterial ribosomal protein bS21 family.

The sequence is that of Small ribosomal subunit protein bS21 from Cellvibrio japonicus (strain Ueda107) (Pseudomonas fluorescens subsp. cellulosa).